The primary structure comprises 95 residues: Cliotide T1 (95 aa).

A cross-link (cyclopeptide (Gly-Asn)) is located at residues 1-30 (GIPCGESCVFIPCITGAIGCSCKSKVCYRN). 3 cysteine pairs are disulfide-bonded: cysteine 4/cysteine 20, cysteine 8/cysteine 22, and cysteine 13/cysteine 27. Positions 31-95 (HVIAAEAKTM…KDHLKMSITN (65 aa)) are cleaved as a propeptide — removed in mature form.

In terms of processing, contains 3 disulfide bonds. This is a cyclic peptide. Expressed in flower, stem, shoot, root, leaf, seed, pod and nodule (at protein level).

Probably participates in a plant defense mechanism. Active against Gram-negative bacteria E.coli ATCC 700926 (MIC=1.1 uM), K.pneumoniae ATTC 13883 (MIC=2.7 uM) and P.aeruginosa ATCC 39018 (MIC=4.7 uM). Has hemolytic and cytotoxic activity. In Clitoria ternatea (Butterfly pea), this protein is Cliotide T1.